A 205-amino-acid chain; its full sequence is Methylthioribulose-1-phosphate dehydratase (205 aa).

Zn(2+) contacts are provided by His96 and His98.

This sequence belongs to the aldolase class II family. MtnB subfamily. Zn(2+) is required as a cofactor.

The enzyme catalyses 5-(methylsulfanyl)-D-ribulose 1-phosphate = 5-methylsulfanyl-2,3-dioxopentyl phosphate + H2O. The protein operates within amino-acid biosynthesis; L-methionine biosynthesis via salvage pathway; L-methionine from S-methyl-5-thio-alpha-D-ribose 1-phosphate: step 2/6. Its function is as follows. Catalyzes the dehydration of methylthioribulose-1-phosphate (MTRu-1-P) into 2,3-diketo-5-methylthiopentyl-1-phosphate (DK-MTP-1-P). The protein is Methylthioribulose-1-phosphate dehydratase of Pseudomonas aeruginosa (strain UCBPP-PA14).